The primary structure comprises 176 residues: dCTP deaminase (176 aa).

DCTP-binding positions include 102–107 and Asp118; that span reads RSTFAR. The active-site Proton donor/acceptor is the Glu128. DCTP-binding residues include Tyr160, Lys166, and Gln167.

The protein belongs to the dCTP deaminase family. In terms of assembly, homotrimer.

The enzyme catalyses dCTP + H2O + H(+) = dUTP + NH4(+). It participates in pyrimidine metabolism; dUMP biosynthesis; dUMP from dCTP (dUTP route): step 1/2. Catalyzes the deamination of dCTP to dUTP. The sequence is that of dCTP deaminase from Staphylothermus marinus (strain ATCC 43588 / DSM 3639 / JCM 9404 / F1).